A 268-amino-acid chain; its full sequence is Mediator of RNA polymerase II transcription subunit 18 (268 aa).

The tract at residues 91–112 (APASPVADQDAHMSGTDEKSSV) is disordered. Basic and acidic residues predominate over residues 99–112 (QDAHMSGTDEKSSV).

It belongs to the Mediator complex subunit 18 family. As to quaternary structure, component of the Mediator complex.

Its subcellular location is the nucleus. Component of the Mediator complex, a coactivator involved in the regulated transcription of nearly all RNA polymerase II-dependent genes. Mediator functions as a bridge to convey information from gene-specific regulatory proteins to the basal RNA polymerase II transcription machinery. Mediator is recruited to promoters by direct interactions with regulatory proteins and serves as a scaffold for the assembly of a functional preinitiation complex with RNA polymerase II and the general transcription factors. The polypeptide is Mediator of RNA polymerase II transcription subunit 18 (srb5) (Aspergillus fumigatus (strain ATCC MYA-4609 / CBS 101355 / FGSC A1100 / Af293) (Neosartorya fumigata)).